The chain runs to 430 residues: Enolase (430 aa).

(2R)-2-phosphoglycerate is bound at residue Q165. The active-site Proton donor is the E207. Residues D244, E287, and D314 each coordinate Mg(2+). 4 residues coordinate (2R)-2-phosphoglycerate: K339, R368, S369, and K390. The active-site Proton acceptor is the K339.

The protein belongs to the enolase family. As to quaternary structure, component of the RNA degradosome, a multiprotein complex involved in RNA processing and mRNA degradation. Mg(2+) serves as cofactor.

It is found in the cytoplasm. The protein localises to the secreted. It localises to the cell surface. It catalyses the reaction (2R)-2-phosphoglycerate = phosphoenolpyruvate + H2O. Its pathway is carbohydrate degradation; glycolysis; pyruvate from D-glyceraldehyde 3-phosphate: step 4/5. Its function is as follows. Catalyzes the reversible conversion of 2-phosphoglycerate (2-PG) into phosphoenolpyruvate (PEP). It is essential for the degradation of carbohydrates via glycolysis. This chain is Enolase, found in Xylella fastidiosa (strain 9a5c).